A 182-amino-acid polypeptide reads, in one-letter code: MKVLAVTGYKPFELGIFKQDDQALVYIKKAIETRLRSFIDEGLEWILISGQLGTELWAAETAYDLREEYPELKVAVITPFYGQEEKWKEPNKEMYEAVLAQADYEESLTHRPYESPLQFRQKNAFFIEKSDALLLLYDPEMEGSPKYMLQQAEKRRETDGYPIYSITMDDLRAAVEEEDFFT.

This sequence belongs to the UPF0398 family.

The sequence is that of UPF0398 protein RBAM_020340 from Bacillus velezensis (strain DSM 23117 / BGSC 10A6 / LMG 26770 / FZB42) (Bacillus amyloliquefaciens subsp. plantarum).